The sequence spans 355 residues: Peptide chain release factor 1 (355 aa).

At glutamine 231 the chain carries N5-methylglutamine. Residues 280-293 (KERKAKEQSERKDQ) are compositionally biased toward basic and acidic residues. The interval 280–307 (KERKAKEQSERKDQVGTGDRSGRIRTYN) is disordered.

Belongs to the prokaryotic/mitochondrial release factor family. Post-translationally, methylated by PrmC. Methylation increases the termination efficiency of RF1.

The protein localises to the cytoplasm. Its function is as follows. Peptide chain release factor 1 directs the termination of translation in response to the peptide chain termination codons UAG and UAA. The protein is Peptide chain release factor 1 of Campylobacter hominis (strain ATCC BAA-381 / DSM 21671 / CCUG 45161 / LMG 19568 / NCTC 13146 / CH001A).